The following is a 30-amino-acid chain: Rothein 3.3 (30 aa).

Position 30 is a leucine amide (Leu-30).

In terms of tissue distribution, expressed by the skin dorsal glands.

It is found in the secreted. Functionally, lacks antimicrobial activity. Does not inhibit the formation of NO by neuronal nitric oxide. The sequence is that of Rothein 3.3 from Litoria rothii (Roth's tree frog).